Reading from the N-terminus, the 465-residue chain is Serine hydroxymethyltransferase (465 aa).

The residue at position 241 (lysine 241) is an N6-(pyridoxal phosphate)lysine.

It belongs to the SHMT family. As to quaternary structure, homotetramer. The cofactor is pyridoxal 5'-phosphate. Highest expression in the ovary and testis. 6- to 7-fold lower expression in hemocyte, silk gland, midgut and fat body.

It catalyses the reaction (6R)-5,10-methylene-5,6,7,8-tetrahydrofolate + glycine + H2O = (6S)-5,6,7,8-tetrahydrofolate + L-serine. It participates in one-carbon metabolism; tetrahydrofolate interconversion. Its function is as follows. Interconversion of serine and glycine. The protein is Serine hydroxymethyltransferase (692975) of Bombyx mori (Silk moth).